We begin with the raw amino-acid sequence, 363 residues long: Protein-arginine kinase (363 aa).

A Phosphagen kinase C-terminal domain is found at 24-255 (IVLSSRIRLA…EQLIAQERAA (232 aa)). Residues 27–31 (SSRIR), H92, R126, 177–181 (RASVM), and 208–213 (RGTYGE) each bind ATP. An RDXXRA motif of the pArg binding pocket involved in allosteric regulation motif is present at residues 338 to 343 (RDVRRA).

It belongs to the ATP:guanido phosphotransferase family. Homodimer. Dimerization is important for full catalytic activity.

It carries out the reaction L-arginyl-[protein] + ATP = N(omega)-phospho-L-arginyl-[protein] + ADP + H(+). Its activity is regulated as follows. Appears to be allosterically activated by the binding of pArg-containing polypeptides to the pArg-binding pocket localized in the C-terminal domain of McsB. Its function is as follows. Catalyzes the specific phosphorylation of arginine residues in a large number of proteins. Is part of the bacterial stress response system, where it is involved in regulating the global heat shock repressor CtsR; phosphorylates arginine residues in the winged helix-turn-helix domain of CtsR, thereby preventing its binding to DNA and consequently inducing the expression of repressed genes. Protein arginine phosphorylation has a physiologically important role and is involved in the regulation of many critical cellular processes, such as protein homeostasis, motility, competence, and stringent and stress responses, by regulating gene expression and protein activity. Acts exclusively on Arg residues, since it cannot phosphorylate Tyr, Ser, Thr, His, Asp and Lys. Has no free arginine kinase activity. In Geobacillus stearothermophilus (Bacillus stearothermophilus), this protein is Protein-arginine kinase.